The following is a 229-amino-acid chain: 3-dehydroquinate dehydratase (229 aa).

3-dehydroquinate contacts are provided by residues 33–35 (EWR) and Arg65. His121 serves as the catalytic Proton donor/acceptor. The active-site Schiff-base intermediate with substrate is the Lys146. 3-dehydroquinate is bound by residues Arg188, Ser207, and Gln211.

It belongs to the type-I 3-dehydroquinase family. As to quaternary structure, homodimer.

The enzyme catalyses 3-dehydroquinate = 3-dehydroshikimate + H2O. It functions in the pathway metabolic intermediate biosynthesis; chorismate biosynthesis; chorismate from D-erythrose 4-phosphate and phosphoenolpyruvate: step 3/7. Involved in the third step of the chorismate pathway, which leads to the biosynthesis of aromatic amino acids. Catalyzes the cis-dehydration of 3-dehydroquinate (DHQ) and introduces the first double bond of the aromatic ring to yield 3-dehydroshikimate. The polypeptide is 3-dehydroquinate dehydratase (Lactococcus lactis subsp. cremoris (strain MG1363)).